Reading from the N-terminus, the 320-residue chain is ATP-dependent 6-phosphofructokinase (320 aa).

Residue Gly11 participates in ATP binding. Position 21–25 (Arg21–Lys25) interacts with ADP. ATP is bound by residues Arg72–Phe73 and Gly102–Ser105. Residue Asp103 coordinates Mg(2+). A substrate-binding site is contributed by Thr125–Asp127. The Proton acceptor role is filled by Asp127. Arg154 contributes to the ADP binding site. Substrate is bound by residues Arg162 and Met169 to Arg171. ADP is bound by residues Gly185–Asp187 and Lys213–His215. Substrate contacts are provided by residues Glu222, Arg243, and His249–Arg252.

The protein belongs to the phosphofructokinase type A (PFKA) family. ATP-dependent PFK group I subfamily. Prokaryotic clade 'B1' sub-subfamily. In terms of assembly, homotetramer. The cofactor is Mg(2+).

It localises to the cytoplasm. It carries out the reaction beta-D-fructose 6-phosphate + ATP = beta-D-fructose 1,6-bisphosphate + ADP + H(+). The protein operates within carbohydrate degradation; glycolysis; D-glyceraldehyde 3-phosphate and glycerone phosphate from D-glucose: step 3/4. Its activity is regulated as follows. Allosterically activated by ADP and other diphosphonucleosides, and allosterically inhibited by phosphoenolpyruvate. Catalyzes the phosphorylation of D-fructose 6-phosphate to fructose 1,6-bisphosphate by ATP, the first committing step of glycolysis. The chain is ATP-dependent 6-phosphofructokinase from Lactobacillus helveticus (strain DPC 4571).